A 138-amino-acid chain; its full sequence is ATP synthase epsilon chain (138 aa).

Residues 88 to 119 (DREEARSTLSAAQARLDQSEQSEDKQERYEAQ) form a disordered region. The segment covering 109-119 (SEDKQERYEAQ) has biased composition (basic and acidic residues).

Belongs to the ATPase epsilon chain family. F-type ATPases have 2 components, CF(1) - the catalytic core - and CF(0) - the membrane proton channel. CF(1) has five subunits: alpha(3), beta(3), gamma(1), delta(1), epsilon(1). CF(0) has three main subunits: a, b and c.

It localises to the cellular thylakoid membrane. Its function is as follows. Produces ATP from ADP in the presence of a proton gradient across the membrane. In Acaryochloris marina (strain MBIC 11017), this protein is ATP synthase epsilon chain.